The following is a 24-amino-acid chain: Lycosin-I (24 aa).

It belongs to the cationic peptide 04 (cupiennin) family. 05 subfamily. In terms of assembly, monomer in solution. Small size oligomers on the lipid membranes.

It localises to the secreted. The protein resides in the target cell membrane. Antimicrobial peptide that inhibits many reference strains of bacteria and fungi. Is potent against Candida species and multidrug-resistant Acinetobacter baumannii (MDRAB). Is probably localized in the cytoplasm after being transported through the cell wall and membrane. Is able to interact with cell membranes and enter into cell plasma to activate the mitochondrial death pathway to sensitize cancer cells for apoptosis, as well as up-regulates p27 to inhibit cell proliferation. It shows very low effect on normal cells, such as erythrocytes, Hek293t cells. It also potently inhibits tumor cell growth in vitro, and suppresses various tumor growth in vivo when tested in human cancer xenograft models. It interacts with the cell membrane and is then internalized into the cytoplasm of cancer cells to initiate the programmable cell death. In addition, this peptide has the therapeutic effects of anti-hypertension by endothelium-dependent vasodilatation via the NO/sGC/cGMP signaling pathway. In vivo, this peptide also shows a significant ability to inhibit T.gondii invasion and proliferation, making it a potential alternative agent for the treatment of toxoplasmosis. The chain is Lycosin-I from Lycosa singoriensis (Wolf spider).